We begin with the raw amino-acid sequence, 864 residues long: A-kinase anchor protein 3 (864 aa).

Serine 12 carries the phosphoserine; by STK33 modification. The interval 125–138 (VSFYANRLTNLVIA) is PKA-RII subunit binding domain. Disordered regions lie at residues 190–235 (NISS…DKPG) and 251–281 (AGDA…DFSN). Polar residues predominate over residues 204–218 (SGSSQAPGLRYTSTL). Position 206 is a phosphoserine (serine 206). A compositionally biased stretch (basic and acidic residues) spans 219–235 (KIKESTKEGKCPDDKPG). Serine 405 carries the post-translational modification Phosphoserine. Tyrosine 406 is modified (phosphotyrosine). A disordered region spans residues 619–638 (VHEQNTQEEEIHPCERPKTP). Basic and acidic residues predominate over residues 627–638 (EEIHPCERPKTP).

It belongs to the AKAP110 family. As to quaternary structure, interacts with ROPN1 and ROPN1L. Interacts with QRICH2. Phosphorylated by STK33 during sperm flagella assembly. Phosphorylated on tyrosine.

Its subcellular location is the cytoplasmic vesicle. The protein resides in the secretory vesicle. The protein localises to the acrosome. It is found in the cell projection. It localises to the cilium. Its subcellular location is the flagellum. Its function is as follows. Structural component of sperm fibrous sheath. Required for the formation of the subcellular structure of the sperm flagellum, sperm motility and male fertility. The polypeptide is A-kinase anchor protein 3 (Mus musculus (Mouse)).